Consider the following 135-residue polypeptide: Adult cuticle protein 1 (135 aa).

The N-terminal stretch at 1-19 (MKFAVAVIFTLALAMGVQS) is a signal peptide. A run of 3 repeats spans residues 72 to 75 (AAPA), 78 to 81 (AAPA), and 128 to 131 (AAPA).

In terms of tissue distribution, detected in the epidermis underlying the head and thorax (including legs and wings), but not in the abdominal epidermis of newly eclosed flies.

Functionally, component of the cuticle of the adult fruit fly. Could be involved in thickening of the hard adult cuticle. This chain is Adult cuticle protein 1 (Acp1), found in Drosophila melanogaster (Fruit fly).